Reading from the N-terminus, the 460-residue chain is Vitamin K-dependent protein C (460 aa).

An N-terminal signal peptide occupies residues 1–18 (MWQFRVFLLLMSTWGISS). The propeptide occupies 19 to 41 (IPAHPDPVFSSSEHAHQVLRVRR). The 46-residue stretch at 42-87 (ANSFLEEMRPGSLERECMEEICDFEEAQEIFQNVEDTLAFWIKYFD) folds into the Gla domain. 10 positions are modified to 4-carboxyglutamate: Glu47, Glu48, Glu55, Glu57, Glu60, Glu61, Glu66, Glu67, Glu70, and Glu76. Cysteines 58 and 63 form a disulfide. 9 cysteine pairs are disulfide-bonded: Cys91–Cys110, Cys100–Cys105, Cys104–Cys119, Cys121–Cys130, Cys139–Cys150, Cys146–Cys159, Cys161–Cys174, Cys182–Cys319, and Cys238–Cys254. EGF-like domains are found at residues 96-131 (LDHQCDSPCCGHGTCIDGIGSFSCSCDKGWEGKFCQ) and 135-175 (RFQD…MRCK). Asp112 bears the (3R)-3-hydroxyaspartate mark. The Peptidase S1 domain occupies 213–449 (VNGTLTKQGD…YLKWIHSYIG (237 aa)). The N-linked (GlcNAc...) asparagine glycan is linked to Asn214. His253 serves as the catalytic Charge relay system. Asn290 is a glycosylation site (N-linked (GlcNAc...) asparagine). The active-site Charge relay system is Asp299. Asn354 carries N-linked (GlcNAc...) asparagine glycosylation. 2 cysteine pairs are disulfide-bonded: Cys372–Cys386 and Cys397–Cys425. The Charge relay system role is filled by Ser401.

It belongs to the peptidase S1 family. As to quaternary structure, synthesized as a single chain precursor, which is cleaved into a light chain and a heavy chain held together by a disulfide bond. The enzyme is then activated by thrombin, which cleaves a tetradecapeptide from the amino end of the heavy chain; this reaction, which occurs at the surface of endothelial cells, is strongly promoted by thrombomodulin. Post-translationally, the vitamin K-dependent, enzymatic carboxylation of some Glu residues allows the modified protein to bind calcium. The iron and 2-oxoglutarate dependent 3-hydroxylation of aspartate and asparagine is (R) stereospecific within EGF domains. As to expression, plasma; synthesized in the liver.

Its subcellular location is the secreted. The protein localises to the golgi apparatus. It is found in the endoplasmic reticulum. It carries out the reaction Degradation of blood coagulation factors Va and VIIIa.. Functionally, protein C is a vitamin K-dependent serine protease that regulates blood coagulation by inactivating factors Va and VIIIa in the presence of calcium ions and phospholipids. Exerts a protective effect on the endothelial cell barrier function. This chain is Vitamin K-dependent protein C (Proc), found in Mus musculus (Mouse).